The chain runs to 418 residues: Fumarylacetoacetase (418 aa).

Asp127 contributes to the Ca(2+) binding site. The Proton acceptor role is filled by His134. 3 residues coordinate Ca(2+): Glu200, Glu202, and Asp235. Mg(2+)-binding residues include Asp235, Lys255, and Thr259.

It belongs to the FAH family. Requires Ca(2+) as cofactor. Mg(2+) serves as cofactor. In terms of tissue distribution, highly expressed in the intestine and the hypodermis.

It carries out the reaction 4-fumarylacetoacetate + H2O = acetoacetate + fumarate + H(+). Its pathway is amino-acid degradation; L-phenylalanine degradation; acetoacetate and fumarate from L-phenylalanine: step 6/6. Its function is as follows. Fumarylacetoacetase involved in the tyrosine degradation pathway. This Caenorhabditis elegans protein is Fumarylacetoacetase.